Reading from the N-terminus, the 412-residue chain is Multifunctional CCA protein (412 aa).

Residues G8 and R11 each contribute to the ATP site. Positions 8 and 11 each coordinate CTP. Mg(2+) is bound by residues D21 and D23. ATP-binding residues include R91, R137, and R140. 3 residues coordinate CTP: R91, R137, and R140. An HD domain is found at 228 to 329 (TGIHTLMTLS…VKLFDSIDAW (102 aa)).

Belongs to the tRNA nucleotidyltransferase/poly(A) polymerase family. Bacterial CCA-adding enzyme type 1 subfamily. Monomer. Can also form homodimers and oligomers. Requires Mg(2+) as cofactor. The cofactor is Ni(2+).

The enzyme catalyses a tRNA precursor + 2 CTP + ATP = a tRNA with a 3' CCA end + 3 diphosphate. It carries out the reaction a tRNA with a 3' CCA end + 2 CTP + ATP = a tRNA with a 3' CCACCA end + 3 diphosphate. Functionally, catalyzes the addition and repair of the essential 3'-terminal CCA sequence in tRNAs without using a nucleic acid template. Adds these three nucleotides in the order of C, C, and A to the tRNA nucleotide-73, using CTP and ATP as substrates and producing inorganic pyrophosphate. tRNA 3'-terminal CCA addition is required both for tRNA processing and repair. Also involved in tRNA surveillance by mediating tandem CCA addition to generate a CCACCA at the 3' terminus of unstable tRNAs. While stable tRNAs receive only 3'-terminal CCA, unstable tRNAs are marked with CCACCA and rapidly degraded. This Escherichia coli (strain SE11) protein is Multifunctional CCA protein.